The sequence spans 215 residues: Thiamine-phosphate synthase (215 aa).

4-amino-2-methyl-5-(diphosphooxymethyl)pyrimidine is bound by residues 37 to 41 (QLRIK) and Asn69. Residues Asp70 and Asp89 each contribute to the Mg(2+) site. Position 108 (Ser108) interacts with 4-amino-2-methyl-5-(diphosphooxymethyl)pyrimidine. Position 134-136 (134-136 (TQT)) interacts with 2-[(2R,5Z)-2-carboxy-4-methylthiazol-5(2H)-ylidene]ethyl phosphate. A 4-amino-2-methyl-5-(diphosphooxymethyl)pyrimidine-binding site is contributed by Lys137. 2-[(2R,5Z)-2-carboxy-4-methylthiazol-5(2H)-ylidene]ethyl phosphate is bound by residues Gly166 and 186–187 (VS).

The protein belongs to the thiamine-phosphate synthase family. The cofactor is Mg(2+).

The enzyme catalyses 2-[(2R,5Z)-2-carboxy-4-methylthiazol-5(2H)-ylidene]ethyl phosphate + 4-amino-2-methyl-5-(diphosphooxymethyl)pyrimidine + 2 H(+) = thiamine phosphate + CO2 + diphosphate. It carries out the reaction 2-(2-carboxy-4-methylthiazol-5-yl)ethyl phosphate + 4-amino-2-methyl-5-(diphosphooxymethyl)pyrimidine + 2 H(+) = thiamine phosphate + CO2 + diphosphate. It catalyses the reaction 4-methyl-5-(2-phosphooxyethyl)-thiazole + 4-amino-2-methyl-5-(diphosphooxymethyl)pyrimidine + H(+) = thiamine phosphate + diphosphate. It participates in cofactor biosynthesis; thiamine diphosphate biosynthesis; thiamine phosphate from 4-amino-2-methyl-5-diphosphomethylpyrimidine and 4-methyl-5-(2-phosphoethyl)-thiazole: step 1/1. In terms of biological role, condenses 4-methyl-5-(beta-hydroxyethyl)thiazole monophosphate (THZ-P) and 2-methyl-4-amino-5-hydroxymethyl pyrimidine pyrophosphate (HMP-PP) to form thiamine monophosphate (TMP). In Yersinia pestis (strain Pestoides F), this protein is Thiamine-phosphate synthase.